The sequence spans 318 residues: Trans-prenyltransferase (318 aa).

The chain crosses the membrane as a helical span at residues 1-21 (MLHLIYISIIVVLIIILISYT). Positions 85, 88, and 122 each coordinate isopentenyl diphosphate. Mg(2+) contacts are provided by D129 and D135. A dimethylallyl diphosphate-binding site is contributed by R140. Position 141 (R141) interacts with isopentenyl diphosphate. Positions 216, 217, and 254 each coordinate dimethylallyl diphosphate.

Belongs to the FPP/GGPP synthase family. Asfivirus trans-prenyltransferase subfamily. Mg(2+) serves as cofactor.

It is found in the host endoplasmic reticulum. It localises to the host membrane. The enzyme catalyses isopentenyl diphosphate + dimethylallyl diphosphate = (2E)-geranyl diphosphate + diphosphate. The catalysed reaction is isopentenyl diphosphate + (2E)-geranyl diphosphate = (2E,6E)-farnesyl diphosphate + diphosphate. It catalyses the reaction isopentenyl diphosphate + (2E,6E)-farnesyl diphosphate = (2E,6E,10E)-geranylgeranyl diphosphate + diphosphate. It carries out the reaction isopentenyl diphosphate + (2E,6E,10E)-geranylgeranyl diphosphate = (2E,6E,10E,14E)-geranylfarnesyl diphosphate + diphosphate. It functions in the pathway isoprenoid biosynthesis; farnesyl diphosphate biosynthesis; farnesyl diphosphate from geranyl diphosphate and isopentenyl diphosphate: step 1/1. The protein operates within isoprenoid biosynthesis; geranyl diphosphate biosynthesis; geranyl diphosphate from dimethylallyl diphosphate and isopentenyl diphosphate: step 1/1. It participates in isoprenoid biosynthesis; geranylgeranyl diphosphate biosynthesis; geranylgeranyl diphosphate from farnesyl diphosphate and isopentenyl diphosphate: step 1/1. Trans-prenyltransferase that catalyzes the sequential condensation of isopentenyl diphosphate (IPP) with different allylic diphosphates, such as dimethylallyl diphosphate (DMAPP), geranyl diphosphate (GPP), farnesyl diphosphate (FPP) and geranylgeranyl diphosphate (GGPP), farnesyl diphosphate being the best allylic substrate. The protein is Trans-prenyltransferase of African swine fever virus (isolate Warthog/Namibia/Wart80/1980) (ASFV).